Here is a 387-residue protein sequence, read N- to C-terminus: Odorant receptor 19a (387 aa).

At 1–40 (MDISKVDSTRALVNHWRIFRIMGIHPPGKRTFWGRHYTAY) the chain is on the cytoplasmic side. The chain crosses the membrane as a helical span at residues 41 to 61 (SMVWNVTFHICIWVSFSVNLL). Residues 62–71 (QSNSLETFCE) lie on the Extracellular side of the membrane. The helical transmembrane segment at 72 to 92 (SLCVTMPHTLYMLKLINVRRM) threads the bilayer. At 93 to 127 (RGQMISSHWLLRLLDKRLGCDDERQIIMAGIERAE) the chain is on the cytoplasmic side. The chain crosses the membrane as a helical span at residues 128–148 (FIFRTIFRGLACTVVLGIIYI). Over 149-171 (SASSEPTLMYPTWIPWNWRDSTS) the chain is Extracellular. Residues 172–192 (AYLATAMLHTTALMANATLVL) form a helical membrane-spanning segment. Residues 193 to 254 (NLSSYPGTYL…LRLFKSLERS (62 aa)) lie on the Cytoplasmic side of the membrane. The helical transmembrane segment at 255–275 (LSMTCFLQFFSTACAQCTICY) threads the bilayer. Topologically, residues 276–285 (FLLFGNVGIM) are extracellular. Residues 286 to 306 (RFMNMLFLLVILTTETLLLCY) traverse the membrane as a helical segment. Over 307–336 (TAELPCKEGESLLTAVYSCNWLSQSVNFRR) the chain is Cytoplasmic. A helical transmembrane segment spans residues 337–357 (LLLLMLARCQIPMILVSGVIV). The Extracellular segment spans residues 358–387 (PISMKTFTVMIKGAYTMLTLLNEIRKTSLE).

This sequence belongs to the insect chemoreceptor superfamily. Heteromeric odorant receptor channel (TC 1.A.69) family. Or2a subfamily. In terms of assembly, interacts with Orco. Complexes exist early in the endomembrane system in olfactory sensory neurons (OSNs), coupling these complexes to the conserved ciliary trafficking pathway. As to expression, expressed in ai2A olfactory sensory neurons in the antenna.

Its subcellular location is the cell membrane. In terms of biological role, odorant receptor which mediates acceptance or avoidance behavior, depending on its substrates. The odorant receptor repertoire encodes a large collection of odor stimuli that vary widely in identity, intensity, and duration. May form a complex with Orco to form odorant-sensing units, providing sensitive and prolonged odorant signaling and calcium permeability. Involved in the preference for citrus fruits for oviposition, especially through the response to valencene, the primary ligand of Or19a. Larvae growing on citrus fruits suffer a reduced risk of parasitism since endoparasitoid wasps that parasitize larvae are strongly repelled by the smell of citrus, as well as by valencene. The protein is Odorant receptor 19a (Or19a) of Drosophila melanogaster (Fruit fly).